A 586-amino-acid polypeptide reads, in one-letter code: Acetylcholinesterase (586 aa).

An N-terminal signal peptide occupies residues 1–21; sequence MNLLVTSSLGVLLHLVVLCQA. A glycan (N-linked (GlcNAc...) asparagine) is linked at asparagine 80. Cysteines 88 and 115 form a disulfide. Serine 221 acts as the Acyl-ester intermediate in catalysis. Cysteine 275 and cysteine 286 are oxidised to a cystine. The active-site Charge relay system is the glutamate 348. A disulfide bond links cysteine 423 and cysteine 542. Residue asparagine 437 is glycosylated (N-linked (GlcNAc...) asparagine). Residue histidine 461 is the Charge relay system of the active site. Asparagine 478 and asparagine 554 each carry an N-linked (GlcNAc...) asparagine glycan. Serine 564 carries the GPI-anchor amidated serine lipid modification. The propeptide at 565–586 is removed in mature form; sequence SGTSSSKGIIFYVLFSILYLIF.

This sequence belongs to the type-B carboxylesterase/lipase family. In terms of assembly, isoform H form is a homodimer; the asymmetric form is a disulfide-bonded oligomer composed of a collagenic subunit (Q) and a variable number of T catalytic subunits. An interchain disulfide bond is present in what becomes position 593 of the T isoform. As to expression, found in the synapses and to a lower extent in extrajunctional areas of muscle and nerve, and on erythrocyte membranes.

The protein resides in the cell membrane. The protein localises to the synapse. It catalyses the reaction acetylcholine + H2O = choline + acetate + H(+). Its activity is regulated as follows. Inhibited by substrate concentrations above 0.5 mM. In terms of biological role, terminates signal transduction at the neuromuscular junction by rapid hydrolysis of the acetylcholine released into the synaptic cleft. May be involved in cell-cell interactions. This chain is Acetylcholinesterase (ache), found in Tetronarce californica (Pacific electric ray).